Here is a 126-residue protein sequence, read N- to C-terminus: Profilin-1 (126 aa).

It belongs to the profilin family. As to quaternary structure, occurs in many kinds of cells as a complex with monomeric actin in a 1:1 ratio.

Its subcellular location is the cytoplasm. The protein localises to the cytoskeleton. Its function is as follows. Binds to actin and affects the structure of the cytoskeleton. At high concentrations, profilin prevents the polymerization of actin, whereas it enhances it at low concentrations. By binding to PIP2, it inhibits the formation of IP3 and DG. The chain is Profilin-1 (proA) from Dictyostelium discoideum (Social amoeba).